A 320-amino-acid chain; its full sequence is Ferrochelatase (320 aa).

Residues His-194 and Glu-275 each contribute to the Fe cation site.

This sequence belongs to the ferrochelatase family.

Its subcellular location is the cytoplasm. The catalysed reaction is heme b + 2 H(+) = protoporphyrin IX + Fe(2+). Its pathway is porphyrin-containing compound metabolism; protoheme biosynthesis; protoheme from protoporphyrin-IX: step 1/1. In terms of biological role, catalyzes the ferrous insertion into protoporphyrin IX. The protein is Ferrochelatase of Klebsiella pneumoniae (strain 342).